A 323-amino-acid chain; its full sequence is MISVNLASLPIVEDMINRKEDLNIEVIKLENGATVLDCGVNVMGSFEAGKLFTKICLGGLAHVGISISGSLDNKLVLPCVKIKTSHPAIATLGAQKAGWSVSVGKYFAMGSGPARALAMMPKATYEEIDYKDEADVAILCLESSQLPDENVADHVAEKCGVDVSKVYLLVAPTASMVGAVQISGRVVENGTYKMLEALHFDVRKVKFAAGIAPVAPVIGDDLKMMGATNDMVLYGGRTYYYVKSDEGDDIENLCKSLPSCSAETYGKPFLDVFKEANYDFYKIDKGIFAPAVVTINDLRTGKLMSYGETNVDVIKKSLKFSQL.

Belongs to the MCH family.

It is found in the cytoplasm. It catalyses the reaction 5,10-methenyl-5,6,7,8-tetrahydromethanopterin + H2O = N(5)-formyl-5,6,7,8-tetrahydromethanopterin + H(+). It participates in one-carbon metabolism; methanogenesis from CO(2); 5,10-methenyl-5,6,7,8-tetrahydromethanopterin from CO(2): step 3/3. In terms of biological role, catalyzes the reversible interconversion of 5-formyl-H(4)MPT to methenyl-H(4)MPT(+). This is Methenyltetrahydromethanopterin cyclohydrolase from Methanococcus maripaludis (strain C5 / ATCC BAA-1333).